Consider the following 168-residue polypeptide: Ribosome maturation factor RimM (168 aa).

The PRC barrel domain maps to 96 to 168 (EGDYYWTDLI…IIVVEWDADF (73 aa)).

Belongs to the RimM family. In terms of assembly, binds ribosomal protein uS19.

Its subcellular location is the cytoplasm. Functionally, an accessory protein needed during the final step in the assembly of 30S ribosomal subunit, possibly for assembly of the head region. Essential for efficient processing of 16S rRNA. May be needed both before and after RbfA during the maturation of 16S rRNA. It has affinity for free ribosomal 30S subunits but not for 70S ribosomes. This is Ribosome maturation factor RimM from Coxiella burnetii (strain Dugway 5J108-111).